Consider the following 274-residue polypeptide: Large ribosomal subunit protein uL2 (274 aa).

Disordered regions lie at residues 1–23 (MAIK…SFEE) and 222–242 (GSAM…SPIG).

It belongs to the universal ribosomal protein uL2 family. As to quaternary structure, part of the 50S ribosomal subunit. Forms a bridge to the 30S subunit in the 70S ribosome.

Its function is as follows. One of the primary rRNA binding proteins. Required for association of the 30S and 50S subunits to form the 70S ribosome, for tRNA binding and peptide bond formation. It has been suggested to have peptidyltransferase activity; this is somewhat controversial. Makes several contacts with the 16S rRNA in the 70S ribosome. In Dehalococcoides mccartyi (strain ATCC BAA-2266 / KCTC 15142 / 195) (Dehalococcoides ethenogenes (strain 195)), this protein is Large ribosomal subunit protein uL2.